The following is a 770-amino-acid chain: Kinesin-like protein klpA (770 aa).

Residues 1-152 are disordered; the sequence is MENVQSRMQG…GLGKRGEWDQ (152 aa). Positions 85 to 105 are enriched in low complexity; the sequence is SSTLTRSASAASRPRGPLSSS. The span at 106–119 shows a compositional bias: polar residues; that stretch reads TSGRPKTSMSTSRR. The span at 134-152 shows a compositional bias: basic and acidic residues; that stretch reads THQEERSYGGLGKRGEWDQ. Residues 175–425 are a coiled coil; that stretch reads QESSGLKDAL…QELKGNIRVF (251 aa). The 336-residue stretch at 421–756 folds into the Kinesin motor domain; sequence NIRVFCRVRP…LKFATKVHNT (336 aa). Residue 514-521 coordinates ATP; sequence GQTGSGKT.

This sequence belongs to the TRAFAC class myosin-kinesin ATPase superfamily. Kinesin family. NCD subfamily.

It is found in the cytoplasm. It localises to the cytoskeleton. The sequence is that of Kinesin-like protein klpA (klpA) from Emericella nidulans (strain FGSC A4 / ATCC 38163 / CBS 112.46 / NRRL 194 / M139) (Aspergillus nidulans).